The following is a 208-amino-acid chain: Uracil phosphoribosyltransferase (208 aa).

5-phospho-alpha-D-ribose 1-diphosphate contacts are provided by residues R78, R103, and 130-138; that span reads DPMLATGGS. Uracil contacts are provided by residues I193 and 198-200; that span reads GDA. D199 contacts 5-phospho-alpha-D-ribose 1-diphosphate.

This sequence belongs to the UPRTase family. The cofactor is Mg(2+).

It catalyses the reaction UMP + diphosphate = 5-phospho-alpha-D-ribose 1-diphosphate + uracil. The protein operates within pyrimidine metabolism; UMP biosynthesis via salvage pathway; UMP from uracil: step 1/1. With respect to regulation, allosterically activated by GTP. Functionally, catalyzes the conversion of uracil and 5-phospho-alpha-D-ribose 1-diphosphate (PRPP) to UMP and diphosphate. The protein is Uracil phosphoribosyltransferase of Haemophilus influenzae (strain 86-028NP).